We begin with the raw amino-acid sequence, 529 residues long: Chromosomal replication initiator protein DnaA (529 aa).

A domain I, interacts with DnaA modulators region spans residues 1 to 72 (MQDFWHAASA…SLACDYWEAT (72 aa)). Positions 72-192 (TVDVQFVLDP…HVDDSVHERS (121 aa)) are domain II. Positions 193–409 (RLNQILTFDN…GALRKILAYS (217 aa)) are domain III, AAA+ region. ATP-binding residues include G237, G239, K240, and T241. Positions 410-529 (NFHGKEITIE…LHVLEQTLKG (120 aa)) are domain IV, binds dsDNA.

It belongs to the DnaA family. In terms of assembly, oligomerizes as a right-handed, spiral filament on DNA at oriC.

Its subcellular location is the cytoplasm. Its function is as follows. Plays an essential role in the initiation and regulation of chromosomal replication. ATP-DnaA binds to the origin of replication (oriC) to initiate formation of the DNA replication initiation complex once per cell cycle. Binds the DnaA box (a 9 base pair repeat at the origin) and separates the double-stranded (ds)DNA. Forms a right-handed helical filament on oriC DNA; dsDNA binds to the exterior of the filament while single-stranded (ss)DNA is stabiized in the filament's interior. The ATP-DnaA-oriC complex binds and stabilizes one strand of the AT-rich DNA unwinding element (DUE), permitting loading of DNA polymerase. After initiation quickly degrades to an ADP-DnaA complex that is not apt for DNA replication. Binds acidic phospholipids. The chain is Chromosomal replication initiator protein DnaA from Ralstonia pickettii (strain 12J).